Here is a 276-residue protein sequence, read N- to C-terminus: Small ribosomal subunit protein uS2 (276 aa).

N-acetylserine is present on Ser2.

It belongs to the universal ribosomal protein uS2 family. Component of the small ribosomal subunit. Mature ribosomes consist of a small (40S) and a large (60S) subunit. The 40S subunit contains about 33 different proteins and 1 molecule of RNA (18S). The 60S subunit contains about 49 different proteins and 3 molecules of RNA (28S, 5.8S and 5S). Interacts with rps-21.

The protein resides in the cytoplasm. Required for the assembly and/or stability of the 40S ribosomal subunit. Required for the processing of the 20S rRNA-precursor to mature 18S rRNA in a late step of the maturation of 40S ribosomal subunits. Involved in cold-warm shock-induced translocation of the RNA exosome components from the nucleolus to nucleoplasm. The sequence is that of Small ribosomal subunit protein uS2 from Caenorhabditis elegans.